Here is a 225-residue protein sequence, read N- to C-terminus: N-(5'-phosphoribosyl)anthranilate isomerase (225 aa).

This sequence belongs to the TrpF family.

It carries out the reaction N-(5-phospho-beta-D-ribosyl)anthranilate = 1-(2-carboxyphenylamino)-1-deoxy-D-ribulose 5-phosphate. It participates in amino-acid biosynthesis; L-tryptophan biosynthesis; L-tryptophan from chorismate: step 3/5. The protein is N-(5'-phosphoribosyl)anthranilate isomerase of Nitrobacter hamburgensis (strain DSM 10229 / NCIMB 13809 / X14).